The sequence spans 109 residues: ATP-dependent Clp protease adapter protein ClpS (109 aa).

It belongs to the ClpS family. In terms of assembly, binds to the N-terminal domain of the chaperone ClpA.

In terms of biological role, involved in the modulation of the specificity of the ClpAP-mediated ATP-dependent protein degradation. This chain is ATP-dependent Clp protease adapter protein ClpS, found in Lawsonia intracellularis (strain PHE/MN1-00).